The chain runs to 397 residues: 1-deoxy-D-xylulose 5-phosphate reductoisomerase (397 aa).

Residues S10, G11, S12, I13, A36, R37, and N124 each contribute to the NADPH site. A 1-deoxy-D-xylulose 5-phosphate-binding site is contributed by K125. Position 126 (E126) interacts with NADPH. D150 is a Mn(2+) binding site. 1-deoxy-D-xylulose 5-phosphate is bound by residues S151, E152, S186, and H209. E152 contacts Mn(2+). G215 is an NADPH binding site. 1-deoxy-D-xylulose 5-phosphate-binding residues include S222, N227, K228, and E231. Mn(2+) is bound at residue E231.

It belongs to the DXR family. It depends on Mg(2+) as a cofactor. Mn(2+) serves as cofactor.

It catalyses the reaction 2-C-methyl-D-erythritol 4-phosphate + NADP(+) = 1-deoxy-D-xylulose 5-phosphate + NADPH + H(+). The protein operates within isoprenoid biosynthesis; isopentenyl diphosphate biosynthesis via DXP pathway; isopentenyl diphosphate from 1-deoxy-D-xylulose 5-phosphate: step 1/6. In terms of biological role, catalyzes the NADPH-dependent rearrangement and reduction of 1-deoxy-D-xylulose-5-phosphate (DXP) to 2-C-methyl-D-erythritol 4-phosphate (MEP). In Aeromonas hydrophila subsp. hydrophila (strain ATCC 7966 / DSM 30187 / BCRC 13018 / CCUG 14551 / JCM 1027 / KCTC 2358 / NCIMB 9240 / NCTC 8049), this protein is 1-deoxy-D-xylulose 5-phosphate reductoisomerase.